Here is a 434-residue protein sequence, read N- to C-terminus: MQVSVETTQGLGRRLSITVPADTIKQAIKKELINAAKSVRIDGFRKGHVPMNIVEQRYGASVRQDVLGDAMQRSFVDAIIKEKINPAGAPNYVPGEYKEGEDFTFAVEFEVYPEVELKGLDGIEVEKPVVEVNDADVDTMLDTLRKQQATWKETDRAAQAEDRVTVDFSGSIDGEEFEGGKASDFVLAMGQGRMIPGFEEGLVGHKAGEEFTIDVNFPEDYHAENLKGKAAKFAIVLKKVEERELPELTEEFIKRFGVADGSTEGLRAEVRKNMERELKGAVRNRIKTQAIDGLVSANEIDVPAALIDGEVDVLRRQAAQRFGGNEKQALELPRELFEEQAKRRVVVGLLLGEVISTNDLKADEDRVKTLIEEMASAYEDPSEVVEFYSKNKELMNNMRNVALEEQAVEALLAKAKVTEKATTFSELMNQTQQA.

The PPIase FKBP-type domain maps to 161–246 (EDRVTVDFSG…LKKVEERELP (86 aa)).

Belongs to the FKBP-type PPIase family. Tig subfamily.

It is found in the cytoplasm. The enzyme catalyses [protein]-peptidylproline (omega=180) = [protein]-peptidylproline (omega=0). Involved in protein export. Acts as a chaperone by maintaining the newly synthesized protein in an open conformation. Functions as a peptidyl-prolyl cis-trans isomerase. The chain is Trigger factor from Serratia proteamaculans (strain 568).